The primary structure comprises 152 residues: Large ribosomal subunit protein uL13 (152 aa).

Belongs to the universal ribosomal protein uL13 family. As to quaternary structure, part of the 50S ribosomal subunit.

Its function is as follows. This protein is one of the early assembly proteins of the 50S ribosomal subunit, although it is not seen to bind rRNA by itself. It is important during the early stages of 50S assembly. The sequence is that of Large ribosomal subunit protein uL13 from Wolbachia sp. subsp. Drosophila simulans (strain wRi).